A 757-amino-acid polypeptide reads, in one-letter code: Amine oxidase [copper-containing] 2 (757 aa).

Residues 1–4 (MNLK) are Cytoplasmic-facing. Residues 5-25 (VLLLLLGLSFLTVFALVYVLL) form a helical membrane-spanning segment. Over 26-757 (TRQGSFSQSP…NLPSFSYEGL (732 aa)) the chain is Extracellular. 3 N-linked (GlcNAc...) asparagine glycosylation sites follow: Asn-133, Asn-198, and Asn-226. Asp-381 (proton acceptor) is an active-site residue. A disulfide bridge connects residues Cys-399 and Cys-425. Tyr-466 acts as the Schiff-base intermediate with substrate; via topaquinone in catalysis. Tyr-466 is modified (2',4',5'-topaquinone). Cu(2+) contacts are provided by His-517 and His-519. Residues Asp-526, Leu-527, Asp-528, Glu-569, Glu-638, Phe-660, and Asn-662 each contribute to the Ca(2+) site. An N-linked (GlcNAc...) asparagine glycan is attached at Asn-663. Residues Glu-664, Asp-670, and Leu-671 each coordinate Ca(2+). Residue His-681 coordinates Cu(2+). Cysteines 731 and 738 form a disulfide.

Belongs to the copper/topaquinone oxidase family. In terms of assembly, homodimer; disulfide-linked. Probably forms heterodimers with AOC3. Cu(2+) serves as cofactor. Ca(2+) is required as a cofactor. Requires L-topaquinone as cofactor. Post-translationally, topaquinone (TPQ) is generated by copper-dependent autoxidation of a specific tyrosyl residue. In terms of tissue distribution, significantly much highly expressed in retina.

Its subcellular location is the cell membrane. It catalyses the reaction 2-phenylethylamine + O2 + H2O = 2-phenylacetaldehyde + H2O2 + NH4(+). The catalysed reaction is tryptamine + O2 + H2O = indole-3-acetaldehyde + H2O2 + NH4(+). It carries out the reaction tyramine + O2 + H2O = (4-hydroxyphenyl)acetaldehyde + H2O2 + NH4(+). Catalyzes the oxidative deamination of primary amines to the corresponding aldehydes with the concomitant production of hydrogen peroxide and ammonia. Has a preference for 2-phenylethylamine, tryptamine and tyramine. Could also act on methylamine and benzylamine but much less efficiently. The polypeptide is Amine oxidase [copper-containing] 2 (Mus musculus (Mouse)).